The primary structure comprises 692 residues: Elongation factor G (692 aa).

The 275-residue stretch at 8–282 (EKTRNIGIMA…AVIDYLPSPL (275 aa)) folds into the tr-type G domain. GTP is bound by residues 17 to 24 (AHVDAGKT), 81 to 85 (DTPGH), and 135 to 138 (NKMD).

This sequence belongs to the TRAFAC class translation factor GTPase superfamily. Classic translation factor GTPase family. EF-G/EF-2 subfamily.

Its subcellular location is the cytoplasm. In terms of biological role, catalyzes the GTP-dependent ribosomal translocation step during translation elongation. During this step, the ribosome changes from the pre-translocational (PRE) to the post-translocational (POST) state as the newly formed A-site-bound peptidyl-tRNA and P-site-bound deacylated tRNA move to the P and E sites, respectively. Catalyzes the coordinated movement of the two tRNA molecules, the mRNA and conformational changes in the ribosome. The protein is Elongation factor G of Streptococcus agalactiae serotype Ia (strain ATCC 27591 / A909 / CDC SS700).